Consider the following 501-residue polypeptide: Glycerol kinase (501 aa).

Residue Thr16 participates in ADP binding. 3 residues coordinate ATP: Thr16, Thr17, and Ser18. Residue Thr16 coordinates sn-glycerol 3-phosphate. Residue Arg20 participates in ADP binding. Positions 84, 85, 135, and 242 each coordinate sn-glycerol 3-phosphate. Arg84, Glu85, Tyr135, Asp242, and Gln243 together coordinate glycerol. Residues Thr264 and Gly307 each coordinate ADP. Thr264, Gly307, Gln311, and Gly408 together coordinate ATP. Gly408 is a binding site for ADP.

This sequence belongs to the FGGY kinase family.

It catalyses the reaction glycerol + ATP = sn-glycerol 3-phosphate + ADP + H(+). The protein operates within polyol metabolism; glycerol degradation via glycerol kinase pathway; sn-glycerol 3-phosphate from glycerol: step 1/1. In terms of biological role, key enzyme in the regulation of glycerol uptake and metabolism. Catalyzes the phosphorylation of glycerol to yield sn-glycerol 3-phosphate. The chain is Glycerol kinase from Saccharolobus islandicus (strain L.S.2.15 / Lassen #1) (Sulfolobus islandicus).